Here is a 480-residue protein sequence, read N- to C-terminus: MNAVTKITPHTDYKIADISLADWGRKELDIAEHEMPGLMSIRRKHAQTKPLKDVRITGSLHMTIQTAVLIETLKDIGADVRWASCNIFSTQDHAAAAIAATGTPVFAWKGETLEEYWDCTLDALTFTLPDGTLTGPELVVDDGGDVTLLIHKGYELENGSTWVDEPASSHEEGVIKALLKRVAVERPGYWGRVVKDWKGVSEETTTGVHRLYQIAEAGKLLIPAINVNDSVTKSKFDNLYGCRESLADGLKRAMDVMLAGKVAVVCGYGDVGKGSAASLRAYGARVIVTEIDPICALQASMEGFEVNTIESTLGRADIYVTTTGNKDIITVEHLQAMKDQAIVCNIGHFDNEIQVDALKALKDVQKINIKPQVDKYVFPNGNAIFLLADGRLVNLGCATGHPSFVMSNSFANQTLAQIDLWEKRDTYEKKVYILPKHLDEEVARLHLEKIGVKLTTLTKDQADYLGVPVEGPFKPDHYRY.

Residues Thr63, Asp142, and Glu203 each contribute to the substrate site. NAD(+) is bound at residue Thr204–Thr206. Substrate-binding residues include Lys233 and Asp237. NAD(+) contacts are provided by residues Asn238, Gly267–Gly272, Glu290, Asn325, Ile346–His348, and Asn394.

This sequence belongs to the adenosylhomocysteinase family. Requires NAD(+) as cofactor.

The protein resides in the cytoplasm. The enzyme catalyses S-adenosyl-L-homocysteine + H2O = L-homocysteine + adenosine. Its pathway is amino-acid biosynthesis; L-homocysteine biosynthesis; L-homocysteine from S-adenosyl-L-homocysteine: step 1/1. Functionally, may play a key role in the regulation of the intracellular concentration of adenosylhomocysteine. The sequence is that of Adenosylhomocysteinase from Xanthomonas euvesicatoria pv. vesicatoria (strain 85-10) (Xanthomonas campestris pv. vesicatoria).